A 950-amino-acid chain; its full sequence is Glycine dehydrogenase (decarboxylating) (950 aa).

K698 carries the N6-(pyridoxal phosphate)lysine modification.

Belongs to the GcvP family. The glycine cleavage system is composed of four proteins: P, T, L and H. Pyridoxal 5'-phosphate serves as cofactor.

The catalysed reaction is N(6)-[(R)-lipoyl]-L-lysyl-[glycine-cleavage complex H protein] + glycine + H(+) = N(6)-[(R)-S(8)-aminomethyldihydrolipoyl]-L-lysyl-[glycine-cleavage complex H protein] + CO2. In terms of biological role, the glycine cleavage system catalyzes the degradation of glycine. The P protein binds the alpha-amino group of glycine through its pyridoxal phosphate cofactor; CO(2) is released and the remaining methylamine moiety is then transferred to the lipoamide cofactor of the H protein. This Neisseria gonorrhoeae (strain NCCP11945) protein is Glycine dehydrogenase (decarboxylating).